A 171-amino-acid polypeptide reads, in one-letter code: Photosystem I assembly protein Ycf3 (171 aa).

TPR repeat units follow at residues 33 to 66 (AFSY…EEDP), 70 to 103 (SYIL…NSRL), and 118 to 151 (GTKS…APNN).

This sequence belongs to the Ycf3 family.

The protein localises to the plastid. It is found in the chloroplast thylakoid membrane. In terms of biological role, essential for the assembly of the photosystem I (PSI) complex. May act as a chaperone-like factor to guide the assembly of the PSI subunits. In Emiliania huxleyi (Coccolithophore), this protein is Photosystem I assembly protein Ycf3.